The chain runs to 124 residues: Small ribosomal subunit protein uS12 (124 aa).

D89 carries the 3-methylthioaspartic acid modification. The disordered stretch occupies residues 105 to 124 (AGVKDRKKGRSKYGAKRPKA). Positions 109–124 (DRKKGRSKYGAKRPKA) are enriched in basic residues.

Belongs to the universal ribosomal protein uS12 family. In terms of assembly, part of the 30S ribosomal subunit. Contacts proteins S8 and S17. May interact with IF1 in the 30S initiation complex.

Functionally, with S4 and S5 plays an important role in translational accuracy. In terms of biological role, interacts with and stabilizes bases of the 16S rRNA that are involved in tRNA selection in the A site and with the mRNA backbone. Located at the interface of the 30S and 50S subunits, it traverses the body of the 30S subunit contacting proteins on the other side and probably holding the rRNA structure together. The combined cluster of proteins S8, S12 and S17 appears to hold together the shoulder and platform of the 30S subunit. The chain is Small ribosomal subunit protein uS12 from Dichelobacter nodosus (strain VCS1703A).